A 509-amino-acid polypeptide reads, in one-letter code: 3-isopropylmalate dehydratase large subunit, chloroplastic (509 aa).

The span at 1–24 (MASVISSSPFLCKSSSKSDLGISS) shows a compositional bias: low complexity. The tract at residues 1 to 25 (MASVISSSPFLCKSSSKSDLGISSF) is disordered. The transit peptide at 1-47 (MASVISSSPFLCKSSSKSDLGISSFPKSSQISIHRCQKKSISRKIVS) directs the protein to the chloroplast. Positions 376, 445, and 448 each coordinate [4Fe-4S] cluster.

Belongs to the aconitase/IPM isomerase family. As to quaternary structure, heterodimer of the large LEUC/IIL1 subunit and the small LEUD (SSU1, SSU2 or SSU3) subunits. [4Fe-4S] cluster is required as a cofactor. In terms of tissue distribution, expressed in roots, leaves, stems and flowers. Expressed at low levels in siliques.

The protein resides in the plastid. Its subcellular location is the chloroplast stroma. The catalysed reaction is (2R,3S)-3-isopropylmalate = (2S)-2-isopropylmalate. The enzyme catalyses a 2-(omega-methylsulfanyl)alkylmalate = a 2-(omega-methylsulfanyl)alkylmaleate + H2O. It catalyses the reaction 2-(3-methylsulfanyl)propylmalate = 2-(2-methylsulfanyl)propylmaleate + H2O. It carries out the reaction a 3-(omega-methylsulfanyl)alkylmalate = a 2-(omega-methylsulfanyl)alkylmaleate + H2O. The catalysed reaction is 2-(2-methylsulfanyl)ethylmalate = 2-(2-methylsulfanyl)ethylmaleate + H2O. The enzyme catalyses 3-(2-methylsulfanyl)ethylmalate = 2-(2-methylsulfanyl)ethylmaleate + H2O. It catalyses the reaction 3-(3-methylsulfanyl)propylmalate = 2-(2-methylsulfanyl)propylmaleate + H2O. It functions in the pathway amino-acid biosynthesis; L-leucine biosynthesis; L-leucine from 3-methyl-2-oxobutanoate: step 2/4. Its function is as follows. Catalyzes the isomerization between 2-isopropylmalate and 3-isopropylmalate, via the formation of 2-isopropylmaleate. Functions in both the biosynthesis of leucine and in the methionine chain elongation pathway of aliphatic glucosinolate formation. This Arabidopsis thaliana (Mouse-ear cress) protein is 3-isopropylmalate dehydratase large subunit, chloroplastic.